The primary structure comprises 140 residues: ATP synthase epsilon chain (140 aa).

It belongs to the ATPase epsilon chain family. F-type ATPases have 2 components, CF(1) - the catalytic core - and CF(0) - the membrane proton channel. CF(1) has five subunits: alpha(3), beta(3), gamma(1), delta(1), epsilon(1). CF(0) has three main subunits: a, b and c.

It is found in the cell inner membrane. Functionally, produces ATP from ADP in the presence of a proton gradient across the membrane. This is ATP synthase epsilon chain from Legionella pneumophila (strain Paris).